Reading from the N-terminus, the 373-residue chain is Leucine-, isoleucine-, valine-, threonine-, and alanine-binding protein (373 aa).

Residues 1-26 (MKKGTQRLSRLFAAMAIAGFASYSMA) form the signal peptide. Cysteines 80 and 105 form a disulfide.

The protein belongs to the leucine-binding protein family.

The protein localises to the periplasm. Its function is as follows. Component of the high-affinity leucine, isoleucine, valine transport system I (LIV-I), which is operative without Na(+) and is specific for alanine and threonine, in addition to branched-chain amino acids. Binds L-leucine, L-isoleucine, L-valine, L-threonine and L-alanine with nanomolar affinities. Can also bind L-homoserine with high affinity. The protein is Leucine-, isoleucine-, valine-, threonine-, and alanine-binding protein (braC) of Pseudomonas aeruginosa (strain ATCC 15692 / DSM 22644 / CIP 104116 / JCM 14847 / LMG 12228 / 1C / PRS 101 / PAO1).